The primary structure comprises 336 residues: DNA-directed RNA polymerase subunit alpha (336 aa).

The alpha N-terminal domain (alpha-NTD) stretch occupies residues 1-226 (MLIAQRPTLS…ELFGLARELN (226 aa)). An alpha C-terminal domain (alpha-CTD) region spans residues 241-336 (AALAADMALP…DDAAFSDDEL (96 aa)).

The protein belongs to the RNA polymerase alpha chain family. In terms of assembly, homodimer. The RNAP catalytic core consists of 2 alpha, 1 beta, 1 beta' and 1 omega subunit. When a sigma factor is associated with the core the holoenzyme is formed, which can initiate transcription.

The enzyme catalyses RNA(n) + a ribonucleoside 5'-triphosphate = RNA(n+1) + diphosphate. Its function is as follows. DNA-dependent RNA polymerase catalyzes the transcription of DNA into RNA using the four ribonucleoside triphosphates as substrates. The chain is DNA-directed RNA polymerase subunit alpha from Arthrobacter sp. (strain FB24).